The primary structure comprises 201 residues: 3-isopropylmalate dehydratase small subunit (201 aa).

This sequence belongs to the LeuD family. LeuD type 1 subfamily. In terms of assembly, heterodimer of LeuC and LeuD.

It catalyses the reaction (2R,3S)-3-isopropylmalate = (2S)-2-isopropylmalate. Its pathway is amino-acid biosynthesis; L-leucine biosynthesis; L-leucine from 3-methyl-2-oxobutanoate: step 2/4. In terms of biological role, catalyzes the isomerization between 2-isopropylmalate and 3-isopropylmalate, via the formation of 2-isopropylmaleate. This is 3-isopropylmalate dehydratase small subunit from Dinoroseobacter shibae (strain DSM 16493 / NCIMB 14021 / DFL 12).